We begin with the raw amino-acid sequence, 303 residues long: Caspase-7 (303 aa).

The segment at Met1 to Asp27 is disordered. The residue at position 2 (Ala2) is an N-acetylalanine. Positions Ala2–Asp23 are cleaved as a propeptide — N-terminally processed. Residues Glu10 to Asp27 show a composition bias toward basic and acidic residues. At Ser30 the chain carries Phosphoserine. Residues Lys38–Lys41 form an exosite region. The segment at Lys76 to Arg87 is loop L1. Residue His144 is part of the active site. At Thr173 the chain carries Phosphothreonine. Cys186 is a catalytic residue. The segment at Arg187 to Gln196 is loop L2. Positions Ser199–Asp206 are excised as a propeptide. The loop L3 stretch occupies residues Val226–Gly238. A Phosphoserine modification is found at Ser239. A loop L4 region spans residues Glu274–Ile288.

The protein belongs to the peptidase C14A family. As to quaternary structure, heterotetramer that consists of two anti-parallel arranged heterodimers, each one formed by a 20 kDa (p20) and a 11 kDa (p11) subunit. Interacts with XIAP (via its second BIR domain); inhibiting CASP7 activity. Interacts with BIRC6/bruce. Interacts with ATXN3 (short isoform 1). Interacts with HSPA5. In terms of processing, cleavage by different proteases, such as granzyme B (GZMB), caspase-1 (CASP1), caspase-8 (CASP8) or caspase-9 (CASP9) generate the two active subunits. Its involvement in different programmed cell death processes is probably specified by the protease that activates CASP7. Cleaved and activated by initiator caspases (CASP8 and/or CASP9), leading to execution phase of apoptosis. Cleavage and maturation by GZMB regulates granzyme-mediated programmed cell death. Cleaved and activated by CASP1 in response to bacterial infection. Propeptide domains can also be cleaved efficiently by CASP3. Active heterodimers between the small subunit of caspase-7 and the large subunit of CASP3, and vice versa, also occur. Also cleaved at the N-terminus at alternative sites by CAPN1, leading to its activation. Post-translationally, phosphorylation at Ser-30 and Ser-239 by PAK2 inhibits its activity. Phosphorylation at Ser-30 prevents cleavage and activation by initiator caspase CASP9, while phosphorylation at Ser-239 prevents thiol protease activity by preventing substrate-binding. Ubiquitinated by BIRC6; this activity is inhibited by DIABLO/SMAC.

The protein localises to the cytoplasm. The protein resides in the cytosol. It localises to the nucleus. It is found in the secreted. Its subcellular location is the extracellular space. It catalyses the reaction Strict requirement for an Asp residue at position P1 and has a preferred cleavage sequence of Asp-Glu-Val-Asp-|-.. With respect to regulation, during activation, the N-terminal disordered prodomain is removed by cleavage. Concomitantly, double cleavage gives rise to a large Caspase-7 subunit p20 and a small Caspase-7 subunit p11. The two large and two small subunits then assemble to form the active CASP7 complex. Can be cleaved and activated by different caspases, depending on the context. Cleaved and activated by initiator caspases (CASP8 and/or CASP9), leading to execution phase of apoptosis. Cleavage and maturation by GZMB regulates granzyme-mediated programmed cell death. Cleavage and maturation by CASP1 regulates pyroptosis. Inhibited by XIAP, which directly binds to the active site pocket and obstructs substrate entry. Phosphorylation at Ser-30 and Ser-239 by PAK2 inhibits its activity. Inhibited by BIRC6; following inhibition of BIRC6-caspase binding by DIABLO/SMAC, BIRC6 is subjected to caspase cleavage, leading to an increase in active caspases. Thiol protease involved in different programmed cell death processes, such as apoptosis, pyroptosis or granzyme-mediated programmed cell death, by proteolytically cleaving target proteins. Has a marked preference for Asp-Glu-Val-Asp (DEVD) consensus sequences, with some plasticity for alternate non-canonical sequences. Its involvement in the different programmed cell death processes is probably determined by upstream proteases that activate CASP7. Acts as an effector caspase involved in the execution phase of apoptosis: following cleavage and activation by initiator caspases (CASP8 and/or CASP9), mediates execution of apoptosis by catalyzing cleavage of proteins, such as CLSPN, PARP1, PTGES3 and YY1. Compared to CASP3, acts as a minor executioner caspase and cleaves a limited set of target proteins. Acts as a key regulator of the inflammatory response in response to bacterial infection by catalyzing cleavage and activation of the sphingomyelin phosphodiesterase SMPD1 in the extracellular milieu, thereby promoting membrane repair. Regulates pyroptosis in intestinal epithelial cells: cleaved and activated by CASP1 in response to S.typhimurium infection, promoting its secretion to the extracellular milieu, where it catalyzes activation of SMPD1, generating ceramides that repair membranes and counteract the action of gasdermin-D (GSDMD) pores. Regulates granzyme-mediated programmed cell death in hepatocytes: cleaved and activated by granzyme B (GZMB) in response to bacterial infection, promoting its secretion to the extracellular milieu, where it catalyzes activation of SMPD1, generating ceramides that repair membranes and counteract the action of perforin (PRF1) pores. Following cleavage by CASP1 in response to inflammasome activation, catalyzes processing and inactivation of PARP1, alleviating the transcription repressor activity of PARP1. Acts as an inhibitor of type I interferon production during virus-induced apoptosis by mediating cleavage of antiviral proteins CGAS, IRF3 and MAVS, thereby preventing cytokine overproduction. Cleaves and activates sterol regulatory element binding proteins (SREBPs). Cleaves phospholipid scramblase proteins XKR4, XKR8 and XKR9. Cleaves BIRC6 following inhibition of BIRC6-caspase binding by DIABLO/SMAC. This is Caspase-7 (CASP7) from Mesocricetus auratus (Golden hamster).